The chain runs to 365 residues: tRNA/tmRNA (uracil-C(5))-methyltransferase (365 aa).

Glutamine 189, tyrosine 217, asparagine 222, glutamate 238, and aspartate 298 together coordinate S-adenosyl-L-methionine. Cysteine 323 serves as the catalytic Nucleophile. Glutamate 357 (proton acceptor) is an active-site residue.

This sequence belongs to the class I-like SAM-binding methyltransferase superfamily. RNA M5U methyltransferase family. TrmA subfamily.

The catalysed reaction is uridine(54) in tRNA + S-adenosyl-L-methionine = 5-methyluridine(54) in tRNA + S-adenosyl-L-homocysteine + H(+). The enzyme catalyses uridine(341) in tmRNA + S-adenosyl-L-methionine = 5-methyluridine(341) in tmRNA + S-adenosyl-L-homocysteine + H(+). Functionally, dual-specificity methyltransferase that catalyzes the formation of 5-methyluridine at position 54 (m5U54) in all tRNAs, and that of position 341 (m5U341) in tmRNA (transfer-mRNA). The polypeptide is tRNA/tmRNA (uracil-C(5))-methyltransferase (Shewanella sp. (strain W3-18-1)).